Reading from the N-terminus, the 226-residue chain is Chalcone--flavanone isomerase 1 (226 aa).

The substrate site is built by Thr-52, Asn-117, and Thr-194.

Belongs to the chalcone isomerase family.

The enzyme catalyses a chalcone = a flavanone.. It functions in the pathway secondary metabolite biosynthesis; flavonoid biosynthesis. Catalyzes the intramolecular cyclization of bicyclic chalcones into tricyclic (S)-flavanones. Responsible for the isomerization of 4,2',4',6'-tetrahydroxychalcone (also termed chalcone) into naringenin. This is Chalcone--flavanone isomerase 1 (CHI1) from Lotus japonicus (Lotus corniculatus var. japonicus).